Consider the following 280-residue polypeptide: Urease accessory protein UreD (280 aa).

This sequence belongs to the UreD family. As to quaternary structure, ureD, UreF and UreG form a complex that acts as a GTP-hydrolysis-dependent molecular chaperone, activating the urease apoprotein by helping to assemble the nickel containing metallocenter of UreC. The UreE protein probably delivers the nickel.

It is found in the cytoplasm. In terms of biological role, required for maturation of urease via the functional incorporation of the urease nickel metallocenter. In Vibrio parahaemolyticus, this protein is Urease accessory protein UreD.